We begin with the raw amino-acid sequence, 510 residues long: Inositol-3-phosphate synthase 1 (510 aa).

The NAD(+) site is built by glycine 70, glycine 71, asparagine 72, asparagine 73, aspartate 143, isoleucine 180, glutamine 190, arginine 193, threonine 230, alanine 231, asparagine 232, threonine 233, glycine 281, serine 282, aspartate 306, serine 309, asparagine 340, asparagine 341, aspartate 342, lysine 355, glycine 393, aspartate 394, aspartate 422, and serine 423.

This sequence belongs to the myo-inositol 1-phosphate synthase family. It depends on NAD(+) as a cofactor.

It is found in the cytoplasm. It localises to the cytosol. Its subcellular location is the nucleus. It catalyses the reaction D-glucose 6-phosphate = 1D-myo-inositol 3-phosphate. The protein operates within polyol metabolism; myo-inositol biosynthesis; myo-inositol from D-glucose 6-phosphate: step 1/2. Key enzyme in myo-inositol biosynthesis pathway that catalyzes the conversion of glucose 6-phosphate to 1-myo-inositol 1-phosphate in a NAD-dependent manner. May play a role in oxidative stress resistance and influences ascorbate levels. In Populus euphratica (Euphrates poplar), this protein is Inositol-3-phosphate synthase 1.